The following is a 424-amino-acid chain: Serine hydroxymethyltransferase (424 aa).

(6S)-5,6,7,8-tetrahydrofolate contacts are provided by residues Leu118 and 122–124 (GHL). Position 227 is an N6-(pyridoxal phosphate)lysine (Lys227). (6S)-5,6,7,8-tetrahydrofolate contacts are provided by residues Glu243 and 351–353 (SPF).

This sequence belongs to the SHMT family. In terms of assembly, homodimer. Pyridoxal 5'-phosphate is required as a cofactor.

The protein resides in the cytoplasm. It catalyses the reaction (6R)-5,10-methylene-5,6,7,8-tetrahydrofolate + glycine + H2O = (6S)-5,6,7,8-tetrahydrofolate + L-serine. Its pathway is one-carbon metabolism; tetrahydrofolate interconversion. It functions in the pathway amino-acid biosynthesis; glycine biosynthesis; glycine from L-serine: step 1/1. Its function is as follows. Catalyzes the reversible interconversion of serine and glycine with tetrahydrofolate (THF) serving as the one-carbon carrier. This reaction serves as the major source of one-carbon groups required for the biosynthesis of purines, thymidylate, methionine, and other important biomolecules. Also exhibits THF-independent aldolase activity toward beta-hydroxyamino acids, producing glycine and aldehydes, via a retro-aldol mechanism. The protein is Serine hydroxymethyltransferase of Thermosipho africanus (strain TCF52B).